A 418-amino-acid chain; its full sequence is Light-independent protochlorophyllide reductase subunit N (418 aa).

C17, C42, and C103 together coordinate [4Fe-4S] cluster.

This sequence belongs to the BchN/ChlN family. Protochlorophyllide reductase is composed of three subunits; ChlL, ChlN and ChlB. Forms a heterotetramer of two ChlB and two ChlN subunits. Requires [4Fe-4S] cluster as cofactor.

It carries out the reaction chlorophyllide a + oxidized 2[4Fe-4S]-[ferredoxin] + 2 ADP + 2 phosphate = protochlorophyllide a + reduced 2[4Fe-4S]-[ferredoxin] + 2 ATP + 2 H2O. The protein operates within porphyrin-containing compound metabolism; chlorophyll biosynthesis (light-independent). Its function is as follows. Component of the dark-operative protochlorophyllide reductase (DPOR) that uses Mg-ATP and reduced ferredoxin to reduce ring D of protochlorophyllide (Pchlide) to form chlorophyllide a (Chlide). This reaction is light-independent. The NB-protein (ChlN-ChlB) is the catalytic component of the complex. This Prochlorococcus marinus subsp. pastoris (strain CCMP1986 / NIES-2087 / MED4) protein is Light-independent protochlorophyllide reductase subunit N.